A 334-amino-acid polypeptide reads, in one-letter code: D-aspartate oxidase 1 (334 aa).

FAD contacts are provided by aspartate 35, arginine 36, serine 43, glycine 307, and threonine 312. Positions 332–334 (SKL) match the Microbody targeting signal motif.

Belongs to the DAMOX/DASOX family. FAD is required as a cofactor. Expressed in the intestinal cells, hypodermis and in unidentified cells in the head in adult hermaphrodites.

It localises to the peroxisome matrix. The enzyme catalyses D-aspartate + O2 + H2O = oxaloacetate + H2O2 + NH4(+). It catalyses the reaction D-glutamate + O2 + H2O = H2O2 + 2-oxoglutarate + NH4(+). Its activity is regulated as follows. Not inhibited by potassium bromide or thiolactomycin. Selectively catalyzes the oxidative deamination of acidic amino acids. May play a role in the egg-laying events and early development of the worm, in addition to quality control of the germ cells. The sequence is that of D-aspartate oxidase 1 (ddo-1) from Caenorhabditis elegans.